Consider the following 193-residue polypeptide: Allatostatin A (193 aa).

An N-terminal signal peptide occupies residues 1–25 (MKTSSLIAMRLIIFYLLSVVGRSTA). A propeptide spanning residues 26 to 64 (AVEEAPASSLHIPRLNPLSSNLEYDEPSEKRAYAYISEY) is cleaved from the precursor. At isoleucine 74 the chain carries Isoleucine amide. The propeptide occupies 78-84 (WIDNSED). Isoleucine amide occurs at positions 94 and 105. The propeptide occupies 109-139 (NSGYRPLGMDFSVDNMDFHSREDNLDDFIDD). The residue at position 150 (isoleucine 150) is an Isoleucine amide. Position 165 is a serine amide (serine 165). The propeptide occupies 169-193 (LNDVVGPKYLLGLGKGLSENENLIQ).

The protein belongs to the allatostatin family. In terms of tissue distribution, allatostatins A1, A2 and A3 are expressed in brain, antennal lobes, optical lobes, gnathal ganglia, the retrocerebral complex and thoracic, abdominal and ventral ganglia. Allatostain A4 is expressed in brain (at protein level).

It localises to the secreted. May act as a neurotransmitter or neuromodulator. The polypeptide is Allatostatin A (Camponotus floridanus (Florida carpenter ant)).